We begin with the raw amino-acid sequence, 209 residues long: N-(5'-phosphoribosyl)anthranilate isomerase (209 aa).

The protein belongs to the TrpF family.

It catalyses the reaction N-(5-phospho-beta-D-ribosyl)anthranilate = 1-(2-carboxyphenylamino)-1-deoxy-D-ribulose 5-phosphate. It functions in the pathway amino-acid biosynthesis; L-tryptophan biosynthesis; L-tryptophan from chorismate: step 3/5. The protein is N-(5'-phosphoribosyl)anthranilate isomerase of Granulibacter bethesdensis (strain ATCC BAA-1260 / CGDNIH1).